The sequence spans 103 residues: UPF0145 protein HH_1800 (103 aa).

It belongs to the UPF0145 family.

In Helicobacter hepaticus (strain ATCC 51449 / 3B1), this protein is UPF0145 protein HH_1800.